The sequence spans 372 residues: Ligninase LG6 (372 aa).

The signal sequence occupies residues 1–21 (MALKQLAAAVALALSIQAAQG). A propeptide spanning residues 22–28 (AAVKEKR) is cleaved from the precursor. Intrachain disulfides connect Cys-31-Cys-43 and Cys-62-Cys-148. The Proton acceptor role is filled by His-75. Ca(2+) contacts are provided by Asp-76, Gly-94, Asp-96, and Ser-98. His-204 is a heme b binding site. Ca(2+) is bound by residues Ser-205, Asp-222, Thr-224, Val-227, and Asp-229. A disulfide bridge links Cys-277 with Cys-345. N-linked (GlcNAc...) asparagine glycosylation occurs at Asn-285. Positions 352–361 (TLTTLPGPET) are enriched in low complexity. The tract at residues 352–372 (TLTTLPGPETSVQRIQPPPGA) is disordered.

The protein belongs to the peroxidase family. Ligninase subfamily. Heme b serves as cofactor. The cofactor is Ca(2+).

The catalysed reaction is 1-(3,4-dimethoxyphenyl)-2-(2-methoxyphenoxy)propane-1,3-diol + H2O2 = 3,4-dimethoxybenzaldehyde + guaiacol + glycolaldehyde + H2O. The enzyme catalyses 2 (3,4-dimethoxyphenyl)methanol + H2O2 = 2 (3,4-dimethoxyphenyl)methanol radical + 2 H2O. It participates in secondary metabolite metabolism; lignin degradation. In terms of biological role, depolymerization of lignin. Catalyzes the C(alpha)-C(beta) cleavage of the propyl side chains of lignin. The sequence is that of Ligninase LG6 (GLG6) from Phanerodontia chrysosporium (White-rot fungus).